The primary structure comprises 375 residues: EP300-interacting inhibitor of differentiation 3 (375 aa).

The stretch at 23 to 51 (AWQHLVKQEEEEAVKKEEKEEGEDEEEEG) forms a coiled coil. A disordered region spans residues 30-68 (QEEEEAVKKEEKEEGEDEEEEGSDSSSDDPNPEPPCMHP). The span at 42–60 (EEGEDEEEEGSDSSSDDPN) shows a compositional bias: acidic residues.

The protein belongs to the NSE4 family. As to quaternary structure, component of the SMC5-SMC6 complex which consists at least of SMC5, SMC6, NSMCE2, NSMCE1, NSMCE4A or EID3 and NSMCE3; EID3 seems to be a testis-specific subunit. NSMCE1, NSMCE4A or EID3 and NSMCE3 probably form a subcomplex that bridges the head domains of the SMC5:SMC6 heterodimer. Homodimer, and heterodimer with EID2. Interacts with the C-terminal region of CREBBP.

Its subcellular location is the nucleus. The protein resides in the cytoplasm. The protein localises to the chromosome. It is found in the telomere. Tissue-specific component of the SMC5-SMC6 complex, a complex involved in repair of DNA double-strand breaks by homologous recombination. The complex may promote sister chromatid homologous recombination by recruiting the SMC1-SMC3 cohesin complex to double-strand breaks. The complex is required for telomere maintenance via recombination and mediates sumoylation of shelterin complex (telosome) components. Functionally, acts as a repressor of nuclear receptor-dependent transcription possibly by interfering with CREBBP-dependent coactivation. May function as a coinhibitor of other CREBBP/EP300-dependent transcription factors. This is EP300-interacting inhibitor of differentiation 3 from Mus musculus (Mouse).